The chain runs to 723 residues: Pentatricopeptide repeat-containing protein At5g50280, chloroplastic (723 aa).

The N-terminal 44 residues, 1 to 44 (MSMASSSLATQSFFSSFPLSHRLHFPVPYLLLRSSFFRKPLSLS), are a transit peptide targeting the chloroplast. A disordered region spans residues 70-97 (IQQPENSTINSEESECEEEDDEEGDDFT). Residues 81 to 97 (EESECEEEDDEEGDDFT) show a composition bias toward acidic residues. PPR repeat units lie at residues 272 to 306 (DVRLYNAAISGLSASQRYDDAWEVYEAMDKINVYP), 307 to 342 (DNVTCAILITTLRKAGRSAKEVWEIFEKMSEKGVKW), 343 to 377 (SQDVFGGLVKSFCDEGLKEEALVIQTEMEKKGIRS), 378 to 412 (NTIVYNTLMDAYNKSNHIEEVEGLFTEMRDKGLKP), 413 to 447 (SAATYNILMDAYARRMQPDIVETLLREMEDLGLEP), 448 to 483 (NVKSYTCLISAYGRTKKMSDMAADAFLRMKKVGLKP), 484 to 518 (SSHSYTALIHAYSVSGWHEKAYASFEEMCKEGIKP), 519 to 553 (SVETYTSVLDAFRRSGDTGKLMEIWKLMLREKIKG), 554 to 588 (TRITYNTLLDGFAKQGLYIEARDVVSEFSKMGLQP), 589 to 623 (SVMTYNMLMNAYARGGQDAKLPQLLKEMAALNLKP), and 624 to 658 (DSITYSTMIYAFVRVRDFKRAFFYHKMMVKSGQVP). The interval 700 to 723 (TKGKKDEFWKYKTNRTTSPGRHRS) is disordered. The span at 713 to 723 (NRTTSPGRHRS) shows a compositional bias: polar residues.

It belongs to the PPR family. P subfamily.

The protein localises to the plastid. It localises to the chloroplast. The sequence is that of Pentatricopeptide repeat-containing protein At5g50280, chloroplastic (EMB1006) from Arabidopsis thaliana (Mouse-ear cress).